Here is a 201-residue protein sequence, read N- to C-terminus: Large ribosomal subunit protein uL4 (201 aa).

The tract at residues 44–71 is disordered; sequence RAQKTRAEVSGSGKKPWRQKGTGRARSG.

Belongs to the universal ribosomal protein uL4 family. As to quaternary structure, part of the 50S ribosomal subunit.

In terms of biological role, one of the primary rRNA binding proteins, this protein initially binds near the 5'-end of the 23S rRNA. It is important during the early stages of 50S assembly. It makes multiple contacts with different domains of the 23S rRNA in the assembled 50S subunit and ribosome. Its function is as follows. Forms part of the polypeptide exit tunnel. This Photorhabdus laumondii subsp. laumondii (strain DSM 15139 / CIP 105565 / TT01) (Photorhabdus luminescens subsp. laumondii) protein is Large ribosomal subunit protein uL4.